The chain runs to 475 residues: ATP synthase subunit beta (475 aa).

Residue 155–162 (GGAGVGKT) participates in ATP binding.

The protein belongs to the ATPase alpha/beta chains family. F-type ATPases have 2 components, CF(1) - the catalytic core - and CF(0) - the membrane proton channel. CF(1) has five subunits: alpha(3), beta(3), gamma(1), delta(1), epsilon(1). CF(0) has three main subunits: a(1), b(2) and c(9-12). The alpha and beta chains form an alternating ring which encloses part of the gamma chain. CF(1) is attached to CF(0) by a central stalk formed by the gamma and epsilon chains, while a peripheral stalk is formed by the delta and b chains.

It is found in the cell inner membrane. It carries out the reaction ATP + H2O + 4 H(+)(in) = ADP + phosphate + 5 H(+)(out). Produces ATP from ADP in the presence of a proton gradient across the membrane. The catalytic sites are hosted primarily by the beta subunits. This is ATP synthase subunit beta from Rhizobium etli (strain ATCC 51251 / DSM 11541 / JCM 21823 / NBRC 15573 / CFN 42).